Consider the following 278-residue polypeptide: Acyl-[acyl-carrier-protein]--UDP-N-acetylglucosamine O-acyltransferase (278 aa).

The protein belongs to the transferase hexapeptide repeat family. LpxA subfamily. As to quaternary structure, homotrimer.

It localises to the cytoplasm. It carries out the reaction a (3R)-hydroxyacyl-[ACP] + UDP-N-acetyl-alpha-D-glucosamine = a UDP-3-O-[(3R)-3-hydroxyacyl]-N-acetyl-alpha-D-glucosamine + holo-[ACP]. It functions in the pathway glycolipid biosynthesis; lipid IV(A) biosynthesis; lipid IV(A) from (3R)-3-hydroxytetradecanoyl-[acyl-carrier-protein] and UDP-N-acetyl-alpha-D-glucosamine: step 1/6. Involved in the biosynthesis of lipid A, a phosphorylated glycolipid that anchors the lipopolysaccharide to the outer membrane of the cell. In Brucella abortus (strain S19), this protein is Acyl-[acyl-carrier-protein]--UDP-N-acetylglucosamine O-acyltransferase.